The sequence spans 313 residues: Methionyl-tRNA formyltransferase (313 aa).

113-116 contacts (6S)-5,6,7,8-tetrahydrofolate; the sequence is SLLP.

Belongs to the Fmt family.

The enzyme catalyses L-methionyl-tRNA(fMet) + (6R)-10-formyltetrahydrofolate = N-formyl-L-methionyl-tRNA(fMet) + (6S)-5,6,7,8-tetrahydrofolate + H(+). In terms of biological role, attaches a formyl group to the free amino group of methionyl-tRNA(fMet). The formyl group appears to play a dual role in the initiator identity of N-formylmethionyl-tRNA by promoting its recognition by IF2 and preventing the misappropriation of this tRNA by the elongation apparatus. This Francisella tularensis subsp. novicida (strain U112) protein is Methionyl-tRNA formyltransferase.